A 576-amino-acid chain; its full sequence is Origin recognition complex subunit 2 (576 aa).

The Involved in LRWD1-binding repeat unit spans residues 1–100 (MSTLRLKEAK…RNKVYSFQHR (100 aa)). A Phosphothreonine modification is found at Thr-116. A disordered region spans residues 119–218 (KIDPLASNDP…SQGQNRLLPA (100 aa)). The span at 149 to 161 (ENNNKNEFPSIQP) shows a compositional bias: polar residues. A compositionally biased stretch (acidic residues) spans 186–200 (SEDDEEVAKDDEEDT). Residue Ser-246 is modified to Phosphoserine.

Belongs to the ORC2 family. In terms of assembly, component of ORC, a complex composed of at least 6 subunits: ORC1, ORC2, ORC3, ORC4, ORC5 and ORC6. ORC is regulated in a cell-cycle dependent manner. It is sequentially assembled at the exit from anaphase of mitosis and disassembled as cells enter S phase. Interacts with DBF4. Interacts with MCM10. Interacts with LRWD1 throughout the cell cycle; this interaction, which occurs only with non-ubiquitinated form of LRWD1, prevents LRWD1 ubiquitination and hence stabilizes the protein. Interacts with POLQ.

It localises to the nucleus. Component of the origin recognition complex (ORC) that binds origins of replication. DNA-binding is ATP-dependent. The specific DNA sequences that define origins of replication have not been identified yet. ORC is required to assemble the pre-replication complex necessary to initiate DNA replication. Binds histone H3 and H4 trimethylation marks H3K9me3, H3K20me3 and H4K27me3. Stabilizes LRWD1, by protecting it from ubiquitin-mediated proteasomal degradation. Also stabilizes ORC3. The protein is Origin recognition complex subunit 2 (Orc2) of Rattus norvegicus (Rat).